We begin with the raw amino-acid sequence, 657 residues long: Conserved oligomeric Golgi complex subunit 6 (657 aa).

Positions 14–26 are enriched in low complexity; that stretch reads SGAANGLSNGAGA. Residues 14-36 are disordered; the sequence is SGAANGLSNGAGATPAQPNNPLS.

This sequence belongs to the COG6 family. Component of the conserved oligomeric Golgi complex which is composed of eight different subunits and is required for normal Golgi morphology and localization.

The protein resides in the golgi apparatus membrane. In terms of biological role, required for normal Golgi function. This chain is Conserved oligomeric Golgi complex subunit 6 (Cog6), found in Rattus norvegicus (Rat).